Reading from the N-terminus, the 110-residue chain is UPF0122 protein SAR1212 (110 aa).

Belongs to the UPF0122 family.

Functionally, might take part in the signal recognition particle (SRP) pathway. This is inferred from the conservation of its genetic proximity to ftsY/ffh. May be a regulatory protein. This is UPF0122 protein SAR1212 from Staphylococcus aureus (strain MRSA252).